The chain runs to 578 residues: Translation initiation factor eIF2B subunit gamma (578 aa).

2 positions are modified to phosphoserine: Ser-296 and Ser-300. Disordered regions lie at residues 298–337 and 535–578; these read QASF…SATS and DDSV…LFER. A Phosphothreonine modification is found at Thr-306. The span at 544–578 shows a compositional bias: acidic residues; that stretch reads EIAEETDSDDRSDEDSDDSEYTDEYEYEDDGLFER.

This sequence belongs to the eIF-2B gamma/epsilon subunits family. As to quaternary structure, component of the translation initiation factor 2B (eIF2B) complex which is a heterodecamer of two sets of five different subunits: alpha, beta, gamma, delta and epsilon. Subunits alpha, beta and delta comprise a regulatory subcomplex and subunits epsilon and gamma comprise a catalytic subcomplex. Within the complex, the hexameric regulatory complex resides at the center, with the two heterodimeric catalytic subcomplexes bound on opposite sides.

The protein resides in the cytoplasm. It is found in the cytosol. In terms of biological role, acts as a component of the translation initiation factor 2B (eIF2B) complex, which catalyzes the exchange of GDP for GTP on the eukaryotic initiation factor 2 (eIF2) complex gamma subunit. Its guanine nucleotide exchange factor activity is repressed when bound to eIF2 complex phosphorylated on the alpha subunit, thereby limiting the amount of methionyl-initiator methionine tRNA available to the ribosome and consequently global translation is repressed. It activates the synthesis of GCN4 in yeast under amino acid starvation conditions by suppressing the inhibitory effects of multiple AUG codons present in the leader of GCN4 mRNA. It may promote either repression or activation of GCN4 expression depending on amino acid availability. GCD1 stabilizes the interaction between eIF2 and GCD6 and stimulates the catalytic activity in vitro. The polypeptide is Translation initiation factor eIF2B subunit gamma (GCD1) (Saccharomyces cerevisiae (strain ATCC 204508 / S288c) (Baker's yeast)).